Reading from the N-terminus, the 181-residue chain is Protein GrpE (181 aa).

The segment covering 1–13 (MENTQENPATQSA) has biased composition (polar residues). A disordered region spans residues 1-39 (MENTQENPATQSAEDIGSEKQAAQGAAPAAEAADAALAE). Over residues 21–39 (QAAQGAAPAAEAADAALAE) the composition is skewed to low complexity.

Belongs to the GrpE family. Homodimer.

Its subcellular location is the cytoplasm. In terms of biological role, participates actively in the response to hyperosmotic and heat shock by preventing the aggregation of stress-denatured proteins, in association with DnaK and GrpE. It is the nucleotide exchange factor for DnaK and may function as a thermosensor. Unfolded proteins bind initially to DnaJ; upon interaction with the DnaJ-bound protein, DnaK hydrolyzes its bound ATP, resulting in the formation of a stable complex. GrpE releases ADP from DnaK; ATP binding to DnaK triggers the release of the substrate protein, thus completing the reaction cycle. Several rounds of ATP-dependent interactions between DnaJ, DnaK and GrpE are required for fully efficient folding. In Burkholderia lata (strain ATCC 17760 / DSM 23089 / LMG 22485 / NCIMB 9086 / R18194 / 383), this protein is Protein GrpE.